Reading from the N-terminus, the 346-residue chain is Guanine nucleotide-binding protein subunit beta-2 (346 aa).

7 WD repeats span residues 57–96 (GHINKVNSVHFAGDSRHCVTGSLDGKLIIWDTWTANKVQI), 99–138 (LRSAWVMTVAFSPSGNFVACGGMDNQCTVYDVNNRDASGV), 147–185 (GYEGFLSSCRFLDDGHLITGSGDMKICHWDLEKGVKTMD), 188–227 (GHAGDIAGLSLSPDMKTYITGSVDKTAKLWDVREEGHKQM), 230–269 (GHDMDVSSVCYHPSGFGFASCSEDQTARMYDLRADQQIAQ), 274–313 (QKNTGFTSCALSTSGRYLMCGGIEGNVHSWDTMKQRHTGT), and 316–346 (GHENRITCISLCPNGMCLASTSWDQQVRLWL).

The protein belongs to the WD repeat G protein beta family. G proteins are composed of 3 units, alpha, beta and gamma. Interacts with Ggamma30A/Guanine nucleotide-binding protein subunit gamma-e. Expressed exclusively in photoreceptor cells in the compound eye (at protein level).

It localises to the cytoplasm. The protein resides in the cell projection. It is found in the axon. Its subcellular location is the rhabdomere. In terms of biological role, guanine nucleotide-binding proteins (G proteins) are involved as a modulator or transducer in various transmembrane signaling systems. The beta and gamma chains are required for the GTPase activity, for replacement of GDP by GTP, and for G protein-effector interaction. This chain is Guanine nucleotide-binding protein subunit beta-2 (Gbeta76C), found in Drosophila melanogaster (Fruit fly).